The primary structure comprises 333 residues: Ribosomal RNA small subunit methyltransferase H (333 aa).

Residues 43 to 45, D62, Y89, D110, and Q117 each bind S-adenosyl-L-methionine; that span reads GGH. The disordered stretch occupies residues 312–333; that stretch reads RLRAARRIRTTPTRPSPRRRRP.

It belongs to the methyltransferase superfamily. RsmH family.

Its subcellular location is the cytoplasm. It catalyses the reaction cytidine(1402) in 16S rRNA + S-adenosyl-L-methionine = N(4)-methylcytidine(1402) in 16S rRNA + S-adenosyl-L-homocysteine + H(+). Functionally, specifically methylates the N4 position of cytidine in position 1402 (C1402) of 16S rRNA. The sequence is that of Ribosomal RNA small subunit methyltransferase H from Beutenbergia cavernae (strain ATCC BAA-8 / DSM 12333 / CCUG 43141 / JCM 11478 / NBRC 16432 / NCIMB 13614 / HKI 0122).